The sequence spans 974 residues: Short transient receptor potential channel 5 (974 aa).

Residues 1-325 (MAQLYYKKVN…YDGFPGWRRK (325 aa)) are Cytoplasmic-facing. 4 ANK repeats span residues 30-60 (SAEE…IYYN), 69-97 (LGRS…VYVG), 98-124 (DALL…PSGE), and 141-170 (PDIT…TIPR). Zn(2+) is bound by residues His172, Cys176, Cys178, and Cys181. An intramembrane region (discontinuously helical) is located at residues 326 to 360 (HWVVKLLTCMTIGFLFPMLSIAYLISPRSNLGLFI). The Cytoplasmic segment spans residues 361–363 (KKP). The chain crosses the membrane as a helical span at residues 364–384 (FIKFICHTASYLTFLFMLLLA). The Extracellular segment spans residues 385–404 (SQHIVRTDLHVQGPPPTVVE). The chain crosses the membrane as a helical span at residues 405 to 419 (WMILPWVLGFIWGEI). Ca(2+) is bound by residues Glu418, Glu421, Asn436, and Asp439. Topologically, residues 420-433 (KEMWDGGFTEYIHD) are cytoplasmic. Residues 434-454 (WWNLMDFAMNSLYLATISLKI) form a helical membrane-spanning segment. Topologically, residues 455-476 (VAYVKYNGSRPREEWEMWHPTL) are extracellular. The N-linked (GlcNAc...) asparagine glycan is linked to Asn461. Residues 477–497 (IAEALFAISNILSSLRLISLF) form a helical membrane-spanning segment. Topologically, residues 498-512 (TANSHLGPLQISLGR) are cytoplasmic. Residues 513–535 (MLLDILKFLFIYCLVLLAFANGL) traverse the membrane as a helical segment. The Extracellular portion of the chain corresponds to 536 to 603 (NQLYFYYETR…HEFTEFVGAT (68 aa)). A disulfide bridge connects residues Cys553 and Cys558. A helical membrane pass occupies residues 604–624 (MFGTYNVISLVVLLNMLIAMM). The Cytoplasmic segment spans residues 625 to 974 (NNSYQLIADH…GQEEQVTTRL (350 aa)). Disordered regions lie at residues 766-795 (QPRR…RAKS) and 811-838 (GPPL…KRSF). Residues 769–778 (RSLSTSSTEL) show a composition bias toward low complexity. Residues 972 to 974 (TRL) form an essential for binding to NHERF1 PDZ domain region.

This sequence belongs to the transient receptor (TC 1.A.4) family. STrpC subfamily. TRPC5 sub-subfamily. In terms of assembly, homotetramer. Heterotetramer with TRPC1 and/or TRPC4. Each subunit in the homomeric ion channel (via ANK repeats) interacts with one copy of GTP-bound GNAI3; the interaction is direct and activates the ion channel. Interacts with TRPC4AP. Interacts with NHERF1. Interacts with MX1 and RNF24. Interacts (via C-terminus) with CABP1. Interacts with SESTD1 (via the spectrin 1 repeat). Interacts with PLSCR1. Interacts with PKD2L2. In terms of tissue distribution, expressed in brain.

It localises to the cell membrane. It catalyses the reaction Ca(2+)(in) = Ca(2+)(out). Activated by G-protein coupled receptors via direct interaction with GTP-bound GNAI3, which increases the channel sensitivity to phosphatidylinositol bisphosphate. May be activated by intracellular calcium store depletion. Calcium channel activity is enhanced by MYLK, that promotes its subcellular localization at the plasma membrane. Forms a receptor-activated non-selective calcium permeant cation channel. Mediates calcium-dependent phosphatidylserine externalization and apoptosis in neurons via its association with PLSCR1. Acts on distinct neuronal populations in the hypothalamus to regulate innate behaviors including feeding, anxiety (flight/fight/fear), socialization and maternal care. This chain is Short transient receptor potential channel 5 (TRPC5), found in Oryctolagus cuniculus (Rabbit).